Here is a 266-residue protein sequence, read N- to C-terminus: Putative carbamate hydrolase RutD (266 aa).

This sequence belongs to the AB hydrolase superfamily. Hydrolase RutD family.

It catalyses the reaction carbamate + 2 H(+) = NH4(+) + CO2. Involved in pyrimidine catabolism. May facilitate the hydrolysis of carbamate, a reaction that can also occur spontaneously. The protein is Putative carbamate hydrolase RutD of Escherichia coli O127:H6 (strain E2348/69 / EPEC).